The primary structure comprises 30 residues: Glutathione S-transferase (30 aa).

It belongs to the GST superfamily. In terms of assembly, monomer and homodimer.

It is found in the cytoplasm. The catalysed reaction is RX + glutathione = an S-substituted glutathione + a halide anion + H(+). Functionally, conjugation of reduced glutathione to a wide number of exogenous and endogenous hydrophobic electrophiles. This Pseudomonas fluorescens protein is Glutathione S-transferase.